Consider the following 176-residue polypeptide: Adenylyl-sulfate kinase (176 aa).

Residue 12-19 (GLSGAGKS) participates in ATP binding. The Phosphoserine intermediate role is filled by serine 86.

It belongs to the APS kinase family.

It carries out the reaction adenosine 5'-phosphosulfate + ATP = 3'-phosphoadenylyl sulfate + ADP + H(+). The protein operates within sulfur metabolism; hydrogen sulfide biosynthesis; sulfite from sulfate: step 2/3. Functionally, catalyzes the synthesis of activated sulfate. In Gloeothece citriformis (strain PCC 7424) (Cyanothece sp. (strain PCC 7424)), this protein is Adenylyl-sulfate kinase.